We begin with the raw amino-acid sequence, 140 residues long: MQSVQCFGKKGNATAVAHCKVGKGLIKVNGAPLSLVQPEILRMKVYEPILVAGADKFAGVDIRVRVSGGGHVSQIYAIRQAISKAIVAYYQKFVDEHSKAELKKALITYDRTLLVADPRRMEPKKFGGHGARARQQKSYR.

This sequence belongs to the universal ribosomal protein uS9 family. As to quaternary structure, component of the small ribosomal subunit (SSU). Mature yeast ribosomes consist of a small (40S) and a large (60S) subunit. The 40S small subunit contains 1 molecule of ribosomal RNA (18S rRNA) and at least 33 different proteins. The large 60S subunit contains 3 rRNA molecules (25S, 5.8S and 5S rRNA) and at least 46 different proteins.

It is found in the cytoplasm. Functionally, component of the ribosome, a large ribonucleoprotein complex responsible for the synthesis of proteins in the cell. The small ribosomal subunit (SSU) binds messenger RNAs (mRNAs) and translates the encoded message by selecting cognate aminoacyl-transfer RNA (tRNA) molecules. The large subunit (LSU) contains the ribosomal catalytic site termed the peptidyl transferase center (PTC), which catalyzes the formation of peptide bonds, thereby polymerizing the amino acids delivered by tRNAs into a polypeptide chain. The nascent polypeptides leave the ribosome through a tunnel in the LSU and interact with protein factors that function in enzymatic processing, targeting, and the membrane insertion of nascent chains at the exit of the ribosomal tunnel. This Schizosaccharomyces pombe (strain 972 / ATCC 24843) (Fission yeast) protein is Small ribosomal subunit protein uS9A (rps1601).